The chain runs to 117 residues: Hydrogenase maturation factor HypA (117 aa).

His-2 is a Ni(2+) binding site. Zn(2+) is bound by residues Cys-74, Cys-77, Cys-91, and Cys-94.

The protein belongs to the HypA/HybF family.

Functionally, involved in the maturation of [NiFe] hydrogenases. Required for nickel insertion into the metal center of the hydrogenase. This is Hydrogenase maturation factor HypA from Helicobacter pylori (strain J99 / ATCC 700824) (Campylobacter pylori J99).